A 361-amino-acid polypeptide reads, in one-letter code: MQLLNSCCGKGFDGKKKEKEEPSWRVFSLKELHAATNSFNYDNKLGEGRFGSVYWGQLWDGSQIAVKRLKEWSNREEIDFAVEVEILARIRHKNLLSVRGYCAEGQERLLVYEYMQNLSLVSHLHGQHSAECLLDWTKRMKIAISSAQAIAYLHDHATPHIVHGDVRASNVLLDSEFEARVTDFGYGKLMPDDDTGDGATKAKSNNGYISPECDASGKESETSDVYSFGILLMVLVSGKRPLERLNPTTTRCITEWVLPLVYERNFGEIVDKRLSEEHVAEKLKKVVLVGLMCAQTDPDKRPTMSEVVEMLVNESKEKISELEANPLFKNPYSSNENNREHVAEESSDVILEDKDHQQQQE.

In terms of domain architecture, Protein kinase spans 39 to 328 (FNYDNKLGEG…ISELEANPLF (290 aa)). Residues 45 to 53 (LGEGRFGSV) and K67 each bind ATP. The active-site Proton acceptor is D165. 2 disordered regions span residues 195 to 219 (TGDGATKAKSNNGYISPECDASGKE) and 323 to 361 (EANPLFKNPYSSNENNREHVAEESSDVILEDKDHQQQQE). A compositionally biased stretch (basic and acidic residues) spans 351–361 (LEDKDHQQQQE).

It belongs to the protein kinase superfamily. Tyr protein kinase family.

It carries out the reaction L-tyrosyl-[protein] + ATP = O-phospho-L-tyrosyl-[protein] + ADP + H(+). The sequence is that of PTI1-like tyrosine-protein kinase At3g15890 from Arabidopsis thaliana (Mouse-ear cress).